The sequence spans 212 residues: 3-demethoxyubiquinol 3-hydroxylase (212 aa).

Positions 1–14 are enriched in low complexity; it reads MTSPSSRTPRGSTP. A disordered region spans residues 1-22; it reads MTSPSSRTPRGSTPPFEPSADE. Positions 58, 89, 92, 141, 173, and 176 each coordinate Fe cation.

This sequence belongs to the COQ7 family. It depends on Fe cation as a cofactor.

It localises to the cell membrane. The enzyme catalyses a 5-methoxy-2-methyl-3-(all-trans-polyprenyl)benzene-1,4-diol + AH2 + O2 = a 3-demethylubiquinol + A + H2O. It participates in cofactor biosynthesis; ubiquinone biosynthesis. Its function is as follows. Catalyzes the hydroxylation of 2-nonaprenyl-3-methyl-6-methoxy-1,4-benzoquinol during ubiquinone biosynthesis. In Rhodospirillum rubrum (strain ATCC 11170 / ATH 1.1.1 / DSM 467 / LMG 4362 / NCIMB 8255 / S1), this protein is 3-demethoxyubiquinol 3-hydroxylase.